Here is a 447-residue protein sequence, read N- to C-terminus: tRNA-2-methylthio-N(6)-dimethylallyladenosine synthase (447 aa).

Residues 14-130 (KKVYIRTFGC…LPAMIANAGQ (117 aa)) form the MTTase N-terminal domain. Positions 23, 59, 93, 166, 170, and 173 each coordinate [4Fe-4S] cluster. Positions 152 to 382 (RSGTISAFIP…IALQGSISGE (231 aa)) constitute a Radical SAM core domain. In terms of domain architecture, TRAM spans 385–447 (AAEVGAVVEV…TPATLIGTPA (63 aa)).

It belongs to the methylthiotransferase family. MiaB subfamily. In terms of assembly, monomer. Requires [4Fe-4S] cluster as cofactor.

The protein resides in the cytoplasm. The catalysed reaction is N(6)-dimethylallyladenosine(37) in tRNA + (sulfur carrier)-SH + AH2 + 2 S-adenosyl-L-methionine = 2-methylsulfanyl-N(6)-dimethylallyladenosine(37) in tRNA + (sulfur carrier)-H + 5'-deoxyadenosine + L-methionine + A + S-adenosyl-L-homocysteine + 2 H(+). Catalyzes the methylthiolation of N6-(dimethylallyl)adenosine (i(6)A), leading to the formation of 2-methylthio-N6-(dimethylallyl)adenosine (ms(2)i(6)A) at position 37 in tRNAs that read codons beginning with uridine. The polypeptide is tRNA-2-methylthio-N(6)-dimethylallyladenosine synthase (Chlorobium phaeobacteroides (strain BS1)).